A 322-amino-acid polypeptide reads, in one-letter code: Porphobilinogen deaminase (322 aa).

Cysteine 254 is subject to S-(dipyrrolylmethanemethyl)cysteine.

Belongs to the HMBS family. Monomer. Dipyrromethane is required as a cofactor.

It catalyses the reaction 4 porphobilinogen + H2O = hydroxymethylbilane + 4 NH4(+). It functions in the pathway porphyrin-containing compound metabolism; protoporphyrin-IX biosynthesis; coproporphyrinogen-III from 5-aminolevulinate: step 2/4. Functionally, tetrapolymerization of the monopyrrole PBG into the hydroxymethylbilane pre-uroporphyrinogen in several discrete steps. The polypeptide is Porphobilinogen deaminase (Methylococcus capsulatus (strain ATCC 33009 / NCIMB 11132 / Bath)).